The primary structure comprises 344 residues: MKVIKTAPLIPSEIKVLEKEGNRVKISLAPFEFGYAVTLAHPIRRLLLLSSVGYAPIGLKIEGVHHEFDSLRGVTEDVSLFIMNLKNIRFIAKALVGQDSSLENQSVVVDYSFKGSMELRARDLNSDHIEIVNPEMPLATINEDAQLNFSLIIYKGMGYVPSETTRELMPEGYMPLDGSFTPIKKVVYEIENVLVEGDPNYEKIIFDIETDGQIDPYKAFLSAVKVMSKQLGVFGERPIANTEYSGDYAQRDDAKDLSAKIESMNLSARCFNCLDKIGIKYVGELVLMSEEELKGVKNMGKKSYDEIAEKLNDLGYPVGTELSPEQRESLKKRLEKLEDKGGND.

An alpha N-terminal domain (alpha-NTD) region spans residues 1–238; it reads MKVIKTAPLI…KQLGVFGERP (238 aa). The tract at residues 253–344 is alpha C-terminal domain (alpha-CTD); it reads DAKDLSAKIE…EKLEDKGGND (92 aa).

It belongs to the RNA polymerase alpha chain family. Homodimer. The RNAP catalytic core consists of 2 alpha, 1 beta, 1 beta' and 1 omega subunit. When a sigma factor is associated with the core the holoenzyme is formed, which can initiate transcription.

The catalysed reaction is RNA(n) + a ribonucleoside 5'-triphosphate = RNA(n+1) + diphosphate. Functionally, DNA-dependent RNA polymerase catalyzes the transcription of DNA into RNA using the four ribonucleoside triphosphates as substrates. The polypeptide is DNA-directed RNA polymerase subunit alpha (Helicobacter pylori (strain HPAG1)).